The following is a 249-amino-acid chain: Low affinity immunoglobulin gamma Fc region receptor III-A (249 aa).

The N-terminal stretch at 1-20 is a signal peptide; it reads MWYLLLPTALLLTVSSGVGA. At 21–203 the chain is on the extracellular side; the sequence is GLQKAVVNLD…SPSSFLPWHQ (183 aa). Ig-like C2-type domains are found at residues 31 to 103 and 117 to 188; these read PEWV…QLDV and FQEG…LQIS. Cystine bridges form between Cys46/Cys88 and Cys127/Cys171. Residues Asn55 and Asn62 are each glycosylated (N-linked (GlcNAc...) asparagine). Residue Asn179 is glycosylated (N-linked (GlcNAc...) asparagine). The helical transmembrane segment at 204–224 threads the bilayer; the sequence is ITFCLLIGLLFAIDTVLYFSV. At 225–249 the chain is on the cytoplasmic side; it reads QRSLQSSVAVYEEPKLHWSKEPQDK. Tyr235 is subject to Phosphotyrosine.

In terms of assembly, forms a heterooligomeric complex with ITAM-containing signaling subunits FCER1G. Interacts (via transmembrane domain) with signaling subunits; this interaction is a prerequisite for receptor complex expression on the cell surface and intracellular signal transduction. Binds the Fc region of antigen-complexed IgG. In terms of processing, N-glycosylated. Phosphorylated following receptor ligation.

Its subcellular location is the cell membrane. Receptor for the invariable Fc fragment of immunoglobulin gamma (IgG). Binds with intermediate affinity to both IgG2a and IgG2b. Can bind to IgG2a and IgG2b monomers. Does not display binding to IgG1 or IgG3. Recognizes neutralizing virus-specific IgGs displayed on the cell surface of infected cells and triggers antibody-dependent cellular cytotoxicity (ADCC). Confers protection to lethal influenza virus infection. On splenic dendritic cells, uptakes antigen immune complexes and efficiently divert them into MHC class I and II antigen presentation pathways to provide for superior priming of CD4-positive and CD8-positive T cell immune responses. Mediates neutrophil activation by IgG complexes redundantly with FCGR2A. Plays a role in promoting bone resorption by enhancing osteoclast differentiation following binding to IgG2a. Also acts as a receptor for the Fc region of immunoglobulin epsilon (IgE). Binds with low affinity to both the a and b allotypes of IgE. Has also been shown to bind to IgE allotype a only but not to allotype b. Binds aggregated IgE but not the monomeric form and bound monomeric IgG is readily displaced by IgE complexes. Binding to IgE promotes macrophage-mediated phagocytosis, antigen presentation to T cells, production of pro-inflammatory cytokines and the late phase of cutaneous allergic reactions. Mediates enhanced ADCC in response to afucosylated IgGs. The protein is Low affinity immunoglobulin gamma Fc region receptor III-A of Rattus norvegicus (Rat).